The sequence spans 482 residues: Proline--tRNA ligase (482 aa).

Belongs to the class-II aminoacyl-tRNA synthetase family. ProS type 3 subfamily. As to quaternary structure, homodimer.

The protein localises to the cytoplasm. The catalysed reaction is tRNA(Pro) + L-proline + ATP = L-prolyl-tRNA(Pro) + AMP + diphosphate. Catalyzes the attachment of proline to tRNA(Pro) in a two-step reaction: proline is first activated by ATP to form Pro-AMP and then transferred to the acceptor end of tRNA(Pro). The polypeptide is Proline--tRNA ligase (Mycoplasmopsis synoviae (strain 53) (Mycoplasma synoviae)).